Reading from the N-terminus, the 95-residue chain is Aspartyl/glutamyl-tRNA(Asn/Gln) amidotransferase subunit C (95 aa).

This sequence belongs to the GatC family. Heterotrimer of A, B and C subunits.

It carries out the reaction L-glutamyl-tRNA(Gln) + L-glutamine + ATP + H2O = L-glutaminyl-tRNA(Gln) + L-glutamate + ADP + phosphate + H(+). The enzyme catalyses L-aspartyl-tRNA(Asn) + L-glutamine + ATP + H2O = L-asparaginyl-tRNA(Asn) + L-glutamate + ADP + phosphate + 2 H(+). Its function is as follows. Allows the formation of correctly charged Asn-tRNA(Asn) or Gln-tRNA(Gln) through the transamidation of misacylated Asp-tRNA(Asn) or Glu-tRNA(Gln) in organisms which lack either or both of asparaginyl-tRNA or glutaminyl-tRNA synthetases. The reaction takes place in the presence of glutamine and ATP through an activated phospho-Asp-tRNA(Asn) or phospho-Glu-tRNA(Gln). The chain is Aspartyl/glutamyl-tRNA(Asn/Gln) amidotransferase subunit C from Chlorobium luteolum (strain DSM 273 / BCRC 81028 / 2530) (Pelodictyon luteolum).